Consider the following 211-residue polypeptide: Thymidylate kinase (211 aa).

An ATP-binding site is contributed by 10 to 17 (GPDGAGKT).

Belongs to the thymidylate kinase family.

It catalyses the reaction dTMP + ATP = dTDP + ADP. Functionally, phosphorylation of dTMP to form dTDP in both de novo and salvage pathways of dTTP synthesis. The polypeptide is Thymidylate kinase (Lactococcus lactis subsp. cremoris (strain SK11)).